Here is a 175-residue protein sequence, read N- to C-terminus: Anterior gradient protein 2 homolog (175 aa).

The signal sequence occupies residues 1-20 (MEKFSVSAILLLVAISGTLA). Residues 21–40 (KDTTVKSGAKKDPKDSRPKL) are required to promote cell adhesion. Positions 24–44 (TVKSGAKKDPKDSRPKLPQTL) are disordered. A compositionally biased stretch (basic and acidic residues) spans 29–38 (AKKDPKDSRP). 2 consecutive short sequence motifs (homodimer stabilization; interchain) follow at residues 45–54 (SRGWGDQLIW) and 60–67 (EALYRSKT).

Belongs to the AGR family. As to quaternary structure, monomer and homodimer. Interacts with LYPD3 and DAG1 (alphaDAG1). Interacts with MUC2; disulfide-linked. In terms of tissue distribution, expressed in lung, skeletal muscle, testis, liver, stomach, colon, small intestine, the goblet cells of the intestine and the mucuous neck cells of the stomach.

The protein resides in the secreted. Its subcellular location is the endoplasmic reticulum. Required for MUC2 post-transcriptional synthesis and secretion. May play a role in the production of mucus by intestinal cells. Proto-oncogene that may play a role in cell migration, cell differentiation and cell growth. Promotes cell adhesion. This chain is Anterior gradient protein 2 homolog (Agr2), found in Mus musculus (Mouse).